The chain runs to 432 residues: E3 ubiquitin-protein ligase ATL42 (432 aa).

An N-terminal signal peptide occupies residues 1-18 (MYQIFFFFLPLLHSYASA). A helical membrane pass occupies residues 37–57 (LAVVTGVLAIMFALTFVLLVY). The RING-type; atypical zinc finger occupies 123 to 165 (CSVCLSKFESVEILRLLPKCRHAFHIGCIDQWLEQHATCPLCR).

It belongs to the RING-type zinc finger family. ATL subfamily.

It is found in the membrane. The enzyme catalyses S-ubiquitinyl-[E2 ubiquitin-conjugating enzyme]-L-cysteine + [acceptor protein]-L-lysine = [E2 ubiquitin-conjugating enzyme]-L-cysteine + N(6)-ubiquitinyl-[acceptor protein]-L-lysine.. It participates in protein modification; protein ubiquitination. In terms of biological role, E3 ubiquitin-protein ligase able to catalyze polyubiquitination with ubiquitin-conjugating enzyme E2 UBC8 in vitro. The protein is E3 ubiquitin-protein ligase ATL42 (ATL42) of Arabidopsis thaliana (Mouse-ear cress).